The chain runs to 298 residues: Serine/threonine-protein kinase 1 (298 aa).

In terms of domain architecture, Protein kinase spans 38–276; that stretch reads FIATRPMFEG…FKSLVSHPWF (239 aa). ATP-binding positions include 45–53 and Lys65; that span reads FEGGRNNVF. Asp152 acts as the Proton acceptor in catalysis.

It belongs to the protein kinase superfamily. Ser/Thr protein kinase family.

It localises to the virion. It is found in the host cytoplasm. The catalysed reaction is L-seryl-[protein] + ATP = O-phospho-L-seryl-[protein] + ADP + H(+). It catalyses the reaction L-threonyl-[protein] + ATP = O-phospho-L-threonyl-[protein] + ADP + H(+). Functionally, essential for viral replication. It may mediate the virus' progression through DNA replication. In Ornithodoros (relapsing fever ticks), this protein is Serine/threonine-protein kinase 1.